The following is a 124-amino-acid chain: Small ribosomal subunit protein uS12 (124 aa).

At Asp90 the chain carries 3-methylthioaspartic acid.

It belongs to the universal ribosomal protein uS12 family. Part of the 30S ribosomal subunit. Contacts proteins S8 and S17. May interact with IF1 in the 30S initiation complex.

In terms of biological role, with S4 and S5 plays an important role in translational accuracy. Its function is as follows. Interacts with and stabilizes bases of the 16S rRNA that are involved in tRNA selection in the A site and with the mRNA backbone. Located at the interface of the 30S and 50S subunits, it traverses the body of the 30S subunit contacting proteins on the other side and probably holding the rRNA structure together. The combined cluster of proteins S8, S12 and S17 appears to hold together the shoulder and platform of the 30S subunit. This is Small ribosomal subunit protein uS12 from Wolbachia pipientis wMel.